A 177-amino-acid chain; its full sequence is ATP synthase subunit delta (177 aa).

The protein belongs to the ATPase delta chain family. F-type ATPases have 2 components, F(1) - the catalytic core - and F(0) - the membrane proton channel. F(1) has five subunits: alpha(3), beta(3), gamma(1), delta(1), epsilon(1). F(0) has three main subunits: a(1), b(2) and c(10-14). The alpha and beta chains form an alternating ring which encloses part of the gamma chain. F(1) is attached to F(0) by a central stalk formed by the gamma and epsilon chains, while a peripheral stalk is formed by the delta and b chains.

It is found in the cell inner membrane. Functionally, f(1)F(0) ATP synthase produces ATP from ADP in the presence of a proton or sodium gradient. F-type ATPases consist of two structural domains, F(1) containing the extramembraneous catalytic core and F(0) containing the membrane proton channel, linked together by a central stalk and a peripheral stalk. During catalysis, ATP synthesis in the catalytic domain of F(1) is coupled via a rotary mechanism of the central stalk subunits to proton translocation. In terms of biological role, this protein is part of the stalk that links CF(0) to CF(1). It either transmits conformational changes from CF(0) to CF(1) or is implicated in proton conduction. The sequence is that of ATP synthase subunit delta from Shewanella denitrificans (strain OS217 / ATCC BAA-1090 / DSM 15013).